The following is a 233-amino-acid chain: Pyridoxal phosphate homeostasis protein (233 aa).

Residue Lys-36 is modified to N6-(pyridoxal phosphate)lysine.

It belongs to the pyridoxal phosphate-binding protein YggS/PROSC family.

In terms of biological role, pyridoxal 5'-phosphate (PLP)-binding protein, which is involved in PLP homeostasis. This Vibrio alginolyticus protein is Pyridoxal phosphate homeostasis protein.